The following is a 461-amino-acid chain: MTASLWQQCLTRLQEELPSGEFGLWIRPLQAEFGDRSLTLYAANRFILDWVRDKYLLRINSLFTEICGADAPTLHFAVGRRPTAATVQMNTAAAPVADVRIGPAITVPSWTSKQDAMPEINHKSNINETYTFENFVEGKSNQLALAAAHQVAENPGGAYNPLFLYGGTGLGKTHLLHAVGNGIRARKPNAKVIYMQSERFVQDMVKALQNNAIQEFQRYYRSVDALLIDDIQFFAKKERSQEEFFHTFNALLEGNQQIILTSDRYPKEIDGVEDRLKSRFGWGLTIAIEPPELETRVAILMRKAEENKIHLPHEVAFFIAKRLRSNVRELEGALNRVIANARFTGKPINIDFVREALRDMLALQEKLVTIENIQKTVAEYYKIKVADLLSKRRSRSVARPRQLAMALAKELTNHSLPEIGDAFGGRDHTTVLHACRKIAELREESNDIKEDYSNLIRTLSS.

Residues 1 to 83 (MTASLWQQCL…LHFAVGRRPT (83 aa)) are domain I, interacts with DnaA modulators. The interval 83–124 (TAATVQMNTAAAPVADVRIGPAITVPSWTSKQDAMPEINHKS) is domain II. The interval 125-341 (NINETYTFEN…GALNRVIANA (217 aa)) is domain III, AAA+ region. G169, G171, K172, and T173 together coordinate ATP. A domain IV, binds dsDNA region spans residues 342 to 461 (RFTGKPINID…YSNLIRTLSS (120 aa)).

Belongs to the DnaA family. As to quaternary structure, oligomerizes as a right-handed, spiral filament on DNA at oriC.

It is found in the cytoplasm. Functionally, plays an essential role in the initiation and regulation of chromosomal replication. ATP-DnaA binds to the origin of replication (oriC) to initiate formation of the DNA replication initiation complex once per cell cycle. Binds the DnaA box (a 9 base pair repeat at the origin) and separates the double-stranded (ds)DNA. Forms a right-handed helical filament on oriC DNA; dsDNA binds to the exterior of the filament while single-stranded (ss)DNA is stabiized in the filament's interior. The ATP-DnaA-oriC complex binds and stabilizes one strand of the AT-rich DNA unwinding element (DUE), permitting loading of DNA polymerase. After initiation quickly degrades to an ADP-DnaA complex that is not apt for DNA replication. Binds acidic phospholipids. This chain is Chromosomal replication initiator protein DnaA, found in Tolumonas auensis (strain DSM 9187 / NBRC 110442 / TA 4).